A 540-amino-acid chain; its full sequence is Membrane protein insertase YidC (540 aa).

Helical transmembrane passes span 1-21 (MVVQNNFLFIAFIFVTFMMLD), 351-371 (NWGISIIIITFMVRGIMFPLT), 418-438 (LGGCMPLIIQMPIFLALYYML), 464-484 (ILPIIMGITMFLIQKISPSSI), and 497-517 (PLIFTIFFLWFPSGLVLYYII).

It belongs to the OXA1/ALB3/YidC family. Type 1 subfamily. Interacts with the Sec translocase complex via SecD. Specifically interacts with transmembrane segments of nascent integral membrane proteins during membrane integration.

Its subcellular location is the cell membrane. In terms of biological role, required for the insertion and/or proper folding and/or complex formation of integral membrane proteins into the membrane. Involved in integration of membrane proteins that insert both dependently and independently of the Sec translocase complex, as well as at least some lipoproteins. Aids folding of multispanning membrane proteins. In Wigglesworthia glossinidia brevipalpis, this protein is Membrane protein insertase YidC.